Here is a 315-residue protein sequence, read N- to C-terminus: Homoserine O-succinyltransferase (315 aa).

Cys-142 serves as the catalytic Acyl-thioester intermediate. Substrate contacts are provided by Lys-163 and Ser-192. His-235 (proton acceptor) is an active-site residue. The active site involves Glu-237. Residue Arg-249 coordinates substrate. The segment covering 249–258 has biased composition (basic and acidic residues); that stretch reads RDCEKSDNAP. Positions 249 to 271 are disordered; the sequence is RDCEKSDNAPKPENYFPDDDATK.

This sequence belongs to the MetA family.

It is found in the cytoplasm. It carries out the reaction L-homoserine + succinyl-CoA = O-succinyl-L-homoserine + CoA. Its pathway is amino-acid biosynthesis; L-methionine biosynthesis via de novo pathway; O-succinyl-L-homoserine from L-homoserine: step 1/1. Transfers a succinyl group from succinyl-CoA to L-homoserine, forming succinyl-L-homoserine. This Pseudoalteromonas translucida (strain TAC 125) protein is Homoserine O-succinyltransferase.